Reading from the N-terminus, the 269-residue chain is MGILSVDLLITLQILPVFFSNCLFLALYDSVILLKHVVLLLSRSKSTRGEWRRMLTSEGMRCIWKSFLLDAYKQVKLGEDAPNSSVVHVSNPEGSNNHGHGTQEKTVDGAECHLLDFANPERPLVVNFGSATUPPFTSQLPAFSKLVEEFSSVADFLLVYIDEAHPSDGWAVPGDSSLSFEVKKHQNQEDRCAAAHQLLERFSLPPQCRVVADRMDNNANVAYGVAFERVCIVQRQKIAYLGGKGPFYYNLQEVRRWLEKNFSKRUKKT.

At 1 to 9 the chain is on the lumenal side; that stretch reads MGILSVDLL. The chain crosses the membrane as a helical; Signal-anchor for type III membrane protein span at residues 10 to 34; the sequence is ITLQILPVFFSNCLFLALYDSVILL. Residues 35 to 269 lie on the Cytoplasmic side of the membrane; that stretch reads KHVVLLLSRS…KNFSKRUKKT (235 aa). Residue selenocysteine 133 is part of the active site. Residues selenocysteine 133 and selenocysteine 266 are each a non-standard amino acid (selenocysteine).

The protein belongs to the iodothyronine deiodinase family. In terms of assembly, predominantly monomer. Can form homodimers but homodimerization is not essential for enzyme activity. Interacts with USP20 and USP33. Interacts with MARCHF6. In terms of processing, ubiquitinated by MARCHF6, leading to its degradation by the proteasome. Deubiquitinated by USP20 and USP33. More expressed in pituitary than in brain, low to undetectable levels in thyroid and skeletal muscle.

The protein localises to the endoplasmic reticulum membrane. It catalyses the reaction 3,3',5-triiodo-L-thyronine + iodide + A + H(+) = L-thyroxine + AH2. The catalysed reaction is 3,3'-diiodo-L-thyronine + iodide + A + H(+) = 3,3',5'-triiodo-L-thyronine + AH2. The enzyme catalyses 3'-iodo-L-thyronine + iodide + A + H(+) = 3',5'-diiodo-L-thyronine + AH2. It carries out the reaction 3,3'-diiodothyronamine + iodide + A + H(+) = 3,3',5'-triiodothyronamine + AH2. It catalyses the reaction 3'-iodothyronamine + iodide + A + H(+) = 3',5'-diiodothyronamine + AH2. Functionally, plays a crucial role in the metabolism of thyroid hormones (TH) and has specific roles in TH activation and inactivation by deiodination.Catalyzes the deiodination of L-thyroxine (T4) to 3,5,3'-triiodothyronine (T3) and 3,3',5'-triiodothyronine (rT3) to 3,3'-diiodothyronine (3,3'-T2) via outer-ring deiodination (ORD). Catalyzes the deiodination of 3',5'-diiodothyronine (3',5'-T2) to 3'-monoiodothyronine (3'-T1) via ORD. Catalyzes the phenolic ring deiodinations of 3,3',5'-triiodothyronamine and 3',5'- diiodothyronamine. This is Type II iodothyronine deiodinase (DIO2) from Sus scrofa (Pig).